Reading from the N-terminus, the 137-residue chain is MSEALKILNNIRTLRAQARECTLETLEEMLEKLEVVVNERREEESAAAAEVEERTRKLQQYREMLIADGIDPNELLNSMAAAKSGTKAKRAARPAKYSYVDENGETKTWTGQGRTPAVIKKAMEEQDKQLEDFLIKE.

Residues 112–117 (QGRTPA) mediate DNA binding.

This sequence belongs to the histone-like protein H-NS family. Homodimer that oligomerizes on DNA into higher-order complexes that form bridges between disparate regions of DNA compacting it. Interacts with Hha, YdgT and StpA.

The protein localises to the cytoplasm. It is found in the nucleoid. In terms of biological role, a DNA-binding protein implicated in transcriptional repression and chromosome organization and compaction. Binds nucleation sites in AT-rich DNA and bridges them, forming higher-order nucleoprotein complexes and condensing the chromosome. As many horizontally transferred genes are AT-rich, it plays a central role in silencing foreign genes. A subset of genes are repressed by H-NS in association with other proteins. The protein is DNA-binding protein H-NS (hns) of Salmonella paratyphi A (strain ATCC 9150 / SARB42).